The following is a 110-amino-acid chain: HTH-type transcriptional regulator TnrA (110 aa).

An HTH merR-type domain is found at 13–81 (VISIGIVSEL…TAEILKDMRK (69 aa)). The H-T-H motif DNA-binding region spans 16–35 (IGIVSELTGLSVRQIRYYEE).

In terms of assembly, homodimer. Under conditions of nitrogen excess, TnrA forms a stable complex with feedback-inhibited GlnA. Interacts with GlnK-AmtB complex.

The protein localises to the cell membrane. Under conditions of nitrogen excess, the DNA-binding activity is inhibited by the formation of a stable complex with feedback-inhibited GlnA. The presence of glutamine and AMP increases the inhibitory activity of glutamine synthetase by more than 1000-fold. Transcription regulator that actives the transcription of genes required for nitrogen assimilation such as nrgAB (ammonium transport), nasABCDEF (nitrate/nitrite assimilation), ureABC (urea degradation) and gabP (GABA transport), during nitrogen limitation. Also represses glnRA and gltAB in the absence of ammonium. On the contrary of the MerR members, which require longer DNA sites for high-affinity binding, TnrA requires a DNA sequence of 17 nucleotides as minimal binding site. In Bacillus subtilis (strain 168), this protein is HTH-type transcriptional regulator TnrA.